We begin with the raw amino-acid sequence, 339 residues long: Catalase-related peroxidase (339 aa).

Positions 1–31 (MIRIRNRWFRWLAIALASLVASIGIATVGFA) are cleaved as a signal peptide. Histidine 58 is a catalytic residue. Tyrosine 328 serves as a coordination point for heme.

Belongs to the catalase family. Heme is required as a cofactor.

The protein resides in the periplasm. In terms of biological role, has an organic peroxide-dependent peroxidase activity. The sequence is that of Catalase-related peroxidase (srpA) from Synechococcus elongatus (strain ATCC 33912 / PCC 7942 / FACHB-805) (Anacystis nidulans R2).